Consider the following 518-residue polypeptide: Glycerophosphoinositol transporter 1 (518 aa).

The Cytoplasmic portion of the chain corresponds to 1–44 (MEDKDITSVNEKEVNENTNPRIIKYDAERRATRTETSKKDKWKN). A helical transmembrane segment spans residues 45–65 (IVTIIASGFALISDGYVNGSM). Residues 66-91 (SMLNKVFVMEYGKKNYSSKVSTRVSN) lie on the Extracellular side of the membrane. Asn-80 is a glycosylation site (N-linked (GlcNAc...) asparagine). Residues 92–112 (AALVGIIFGQFFMGIAADYYS) form a helical membrane-spanning segment. Over 113-114 (RK) the chain is Cytoplasmic. Residues 115–136 (SCILVATAILVIGSALCAASHG) traverse the membrane as a helical segment. The Extracellular portion of the chain corresponds to 137–138 (TT). Residues 139 to 159 (VPGMFWMLTVMRGLVGIGVGA) traverse the membrane as a helical segment. At 160–184 (EYPTSTLSANESANEYTTTKRGGIL) the chain is on the cytoplasmic side. A helical membrane pass occupies residues 185–205 (VMVTNLPLAFGGPFATIIFLI). Residues 206 to 216 (VYKICSGTKHL) are Extracellular-facing. Residues 217-237 (EAIWRTVFAIGCFWPLSVFYF) form a helical membrane-spanning segment. Residues 238–268 (RWKTATTEVYEKGRIKRNIPYFLALKFYWKR) lie on the Cytoplasmic side of the membrane. Residues 269–289 (LLGTCGTWFMYDFVTFPNGIF) form a helical membrane-spanning segment. The Extracellular portion of the chain corresponds to 290-306 (SSTIISSVIKDQNDLVK). Residues 307 to 327 (VAEWNLLLGVLAVLGVPIGAY) form a helical membrane-spanning segment. The Cytoplasmic portion of the chain corresponds to 328–335 (LSDRIGRK). Residues 336–356 (YTLMFGFSGYIIFGLIIGCAY) form a helical membrane-spanning segment. The Extracellular segment spans residues 357–360 (DQLK). Residues 361 to 381 (KITPLFIIFYAFMNMLGNAGP) form a helical membrane-spanning segment. The Cytoplasmic portion of the chain corresponds to 382 to 399 (GDMLGVISSEASATAVRG). The chain crosses the membrane as a helical span at residues 400–420 (VFYGLSAVTGKIGSVVGVECF). Topologically, residues 421–430 (QPIRDNLGAR) are extracellular. The helical transmembrane segment at 431-451 (WTFIIAAICGLIGIIITYFFV) threads the bilayer. Topologically, residues 452–518 (PHSLESDLMK…IISVRQVDQS (67 aa)) are cytoplasmic.

Belongs to the major facilitator superfamily. Sugar transporter (TC 2.A.1.1) family.

The protein resides in the cell membrane. The enzyme catalyses sn-glycerol 3-phosphocholine(out) = sn-glycerol 3-phosphocholine(in). The catalysed reaction is sn-glycero-3-phospho-1D-myo-inositol(out) = sn-glycero-3-phospho-1D-myo-inositol(in). In terms of biological role, glycerophosphodiester transporter that mediates uptake of both glycerophosphoinositol (GroPIns) and glycerophosphocholine (GroPCho) as sources of the nutrients inositol and phosphate. This Saccharomyces cerevisiae (strain ATCC 204508 / S288c) (Baker's yeast) protein is Glycerophosphoinositol transporter 1.